The following is a 312-amino-acid chain: Ribosomal RNA small subunit methyltransferase H (312 aa).

Residues 35-37 (GGH), Asp54, Phe81, Asp100, and Gln107 contribute to the S-adenosyl-L-methionine site.

The protein belongs to the methyltransferase superfamily. RsmH family.

The protein localises to the cytoplasm. It catalyses the reaction cytidine(1402) in 16S rRNA + S-adenosyl-L-methionine = N(4)-methylcytidine(1402) in 16S rRNA + S-adenosyl-L-homocysteine + H(+). Its function is as follows. Specifically methylates the N4 position of cytidine in position 1402 (C1402) of 16S rRNA. The sequence is that of Ribosomal RNA small subunit methyltransferase H from Campylobacter jejuni subsp. jejuni serotype O:2 (strain ATCC 700819 / NCTC 11168).